Consider the following 258-residue polypeptide: Isoprenyl transferase (258 aa).

Asp-24 is an active-site residue. Residue Asp-24 participates in Mg(2+) binding. Substrate is bound by residues 25–28 (GNGR), Trp-29, Arg-37, His-41, and 69–71 (SSE). Asn-72 (proton acceptor) is an active-site residue. Residues Trp-73, Arg-75, Arg-190, and 196–198 (RIS) each bind substrate. Residue Glu-209 participates in Mg(2+) binding.

It belongs to the UPP synthase family. Homodimer. Mg(2+) is required as a cofactor.

Its function is as follows. Catalyzes the condensation of isopentenyl diphosphate (IPP) with allylic pyrophosphates generating different type of terpenoids. The protein is Isoprenyl transferase of Ralstonia nicotianae (strain ATCC BAA-1114 / GMI1000) (Ralstonia solanacearum).